A 395-amino-acid chain; its full sequence is HCLS1-binding protein 3 (395 aa).

The residue at position 1 (M1) is an N-acetylmethionine. A Phosphoserine modification is found at S3. The PX domain occupies 19–142; it reads GLDLSVPQHQ…EFLGTRAPGA (124 aa). 2 disordered regions span residues 143–310 and 322–374; these read TGLA…KELF and LGSE…AMDE. Acidic residues predominate over residues 162–174; sequence DSDEAFDFFEQQD. At S191 the chain carries Phosphoserine. Acidic residues predominate over residues 194–206; sequence GEEEEEEEEEEVL. 2 stretches are compositionally biased toward basic and acidic residues: residues 249 to 260 and 299 to 310; these read SDKKVSETRRPL and RPEHGDASKELF. At S254 the chain carries Phosphoserine. A compositionally biased stretch (pro residues) spans 329-339; that stretch reads KPQTKPKPLVP. At K341 the chain carries N6-acetyllysine.

As to quaternary structure, binds HCLS1. Interacts with the SH3 domain of HCLS1 in vitro. Ubiquitously expressed.

Its function is as follows. May be a modulator of IL-2 signaling. The chain is HCLS1-binding protein 3 (Hs1bp3) from Mus musculus (Mouse).